The following is a 488-amino-acid chain: GTPase Der (488 aa).

2 EngA-type G domains span residues 3–166 and 201–374; these read PVVA…VSDG and IKLA…QCAT. GTP is bound by residues 9 to 16, 56 to 60, 118 to 121, 207 to 214, 254 to 258, and 319 to 322; these read GRPNVGKS, DTGGI, NKTD, DTAGV, and NKWD. Residues 375–459 form the KH-like domain; it reads KRVSTALLTR…PIRIQFNEGA (85 aa).

It belongs to the TRAFAC class TrmE-Era-EngA-EngB-Septin-like GTPase superfamily. EngA (Der) GTPase family. Associates with the 50S ribosomal subunit.

GTPase that plays an essential role in the late steps of ribosome biogenesis. The chain is GTPase Der from Sodalis glossinidius (strain morsitans).